The primary structure comprises 118 residues: Fluoride-specific ion channel FluC 1 (118 aa).

The next 2 membrane-spanning stretches (helical) occupy residues 1–21 and 29–49; these read MIQC…RGFV and FNTS…FCIG. Residues Gly71 and Thr74 each contribute to the Na(+) site. Residues 95–115 form a helical membrane-spanning segment; it reads LFILYSILQYGVSFVACLLGY.

Belongs to the fluoride channel Fluc/FEX (TC 1.A.43) family.

It localises to the cell membrane. The catalysed reaction is fluoride(in) = fluoride(out). Its activity is regulated as follows. Na(+) is not transported, but it plays an essential structural role and its presence is essential for fluoride channel function. In terms of biological role, fluoride-specific ion channel. Important for reducing fluoride concentration in the cell, thus reducing its toxicity. The chain is Fluoride-specific ion channel FluC 1 from Staphylococcus saprophyticus subsp. saprophyticus (strain ATCC 15305 / DSM 20229 / NCIMB 8711 / NCTC 7292 / S-41).